Here is a 231-residue protein sequence, read N- to C-terminus: Ribose-5-phosphate isomerase A (231 aa).

Substrate is bound by residues 40–43 (TGST), 93–96 (DGAD), and 106–109 (KGGG). The active-site Proton acceptor is glutamate 115. Lysine 133 lines the substrate pocket.

This sequence belongs to the ribose 5-phosphate isomerase family. Homodimer.

The catalysed reaction is aldehydo-D-ribose 5-phosphate = D-ribulose 5-phosphate. It functions in the pathway carbohydrate degradation; pentose phosphate pathway; D-ribose 5-phosphate from D-ribulose 5-phosphate (non-oxidative stage): step 1/1. In terms of biological role, catalyzes the reversible conversion of ribose-5-phosphate to ribulose 5-phosphate. The polypeptide is Ribose-5-phosphate isomerase A (Escherichia coli O1:K1 / APEC).